The chain runs to 285 residues: NAD kinase (285 aa).

Aspartate 64 functions as the Proton acceptor in the catalytic mechanism. NAD(+) is bound by residues 64–65, 140–141, arginine 151, arginine 168, aspartate 170, and 181–186; these read DG, ND, and TGYNLS.

It belongs to the NAD kinase family. Requires a divalent metal cation as cofactor.

The protein localises to the cytoplasm. It catalyses the reaction NAD(+) + ATP = ADP + NADP(+) + H(+). Its function is as follows. Involved in the regulation of the intracellular balance of NAD and NADP, and is a key enzyme in the biosynthesis of NADP. Catalyzes specifically the phosphorylation on 2'-hydroxyl of the adenosine moiety of NAD to yield NADP. The chain is NAD kinase from Lachnoclostridium phytofermentans (strain ATCC 700394 / DSM 18823 / ISDg) (Clostridium phytofermentans).